The primary structure comprises 203 residues: Holliday junction branch migration complex subunit RuvA (203 aa).

The domain I stretch occupies residues 1–64 (MIGRLRGIIL…EDAQLLYGFN (64 aa)). A domain II region spans residues 65-142 (NKQERTLFKE…KGLHGDLFTP (78 aa)). A flexible linker region spans residues 143-154 (AVDLVLTSPASP). Positions 155–203 (GSEDAEQEAVAALVALGYKPQEASRMVSKIARPDASSETLIRDALRAAL) are domain III.

This sequence belongs to the RuvA family. In terms of assembly, homotetramer. Forms an RuvA(8)-RuvB(12)-Holliday junction (HJ) complex. HJ DNA is sandwiched between 2 RuvA tetramers; dsDNA enters through RuvA and exits via RuvB. An RuvB hexamer assembles on each DNA strand where it exits the tetramer. Each RuvB hexamer is contacted by two RuvA subunits (via domain III) on 2 adjacent RuvB subunits; this complex drives branch migration. In the full resolvosome a probable DNA-RuvA(4)-RuvB(12)-RuvC(2) complex forms which resolves the HJ.

The protein resides in the cytoplasm. The RuvA-RuvB-RuvC complex processes Holliday junction (HJ) DNA during genetic recombination and DNA repair, while the RuvA-RuvB complex plays an important role in the rescue of blocked DNA replication forks via replication fork reversal (RFR). RuvA specifically binds to HJ cruciform DNA, conferring on it an open structure. The RuvB hexamer acts as an ATP-dependent pump, pulling dsDNA into and through the RuvAB complex. HJ branch migration allows RuvC to scan DNA until it finds its consensus sequence, where it cleaves and resolves the cruciform DNA. This Salmonella schwarzengrund (strain CVM19633) protein is Holliday junction branch migration complex subunit RuvA.